The primary structure comprises 137 residues: Large ribosomal subunit protein bL17 (137 aa).

It belongs to the bacterial ribosomal protein bL17 family. Part of the 50S ribosomal subunit. Contacts protein L32.

This is Large ribosomal subunit protein bL17 from Bradyrhizobium sp. (strain BTAi1 / ATCC BAA-1182).